Consider the following 140-residue polypeptide: Cystatin-C (140 aa).

A signal peptide spans 1 to 20 (MASPLRSLMLLLAVLAVAWA). Positions 75 to 79 (QLVAG) match the Secondary area of contact motif. Intrachain disulfides connect cysteine 93–cysteine 103 and cysteine 117–cysteine 137. An N-linked (GlcNAc...) asparagine glycan is attached at asparagine 99.

This sequence belongs to the cystatin family.

It localises to the secreted. In terms of biological role, as an inhibitor of cysteine proteinases, this protein is thought to serve an important physiological role as a local regulator of this enzyme activity. Known to inhibit cathepsin B, H, and L. This Rattus norvegicus (Rat) protein is Cystatin-C (Cst3).